The sequence spans 688 residues: MPNHQSGSPTGSSDLLLSGKKQRPHLALRRKRRREMRKINRKVRRMNLAPIKEKTAWQHLQALISEAEEVLKTSQTPQNSLTLFLALLSVLGPPPVTGESYWAYLPKPPILHPVGWGSTDPIRVLTNQTMYLGGSPDFHGFRNMSGNVHFEGKSDTLPICFSFSFSTPTGCFQVDKQVFLSDTPTVDNNKPGGKGDKRRMWELWLHTLGNSGANTKLVPIKKKLPPKYPHCQIAFKKDAFWEGDESAPPRWLPCAFPDKGVSFSPKGALGLLWDFSLPSPSVDQSDQIKSKKDLFGNYTPPVNKEVHRWYEAGWVEPTWFWENSPKDPNDRDFTALVPHTELFRLVAASRHLILKRPGFQEHEMIPTSACVTYPYAILLGLPQLIDIEKRGSTFHISCSSCRLTNCLDSSAYDYAAIIVKRPPYVLLPVDIGDEPWFDDSAIQTFRYATDLIRAKRFVAAIILGISALIAIITSFAVATTALVKEMQTATFVNNLHRNVTLALSEQRIIDLKLEARLNALEEVVLELGQDVANLKTRMSTRCHANYDFICVTPLPYNATEDWERTRAHLLGIWNDNEISYNIQELTNLISDMSKQHIDAVDLSGLAQSFANGVKALNPLDWTQYFIFIGVGALLLVIVLMIFPIVFQCLAKSLDQVQSDLNVLLLKKKKGGNAAPAAEMVELPRVSYT.

Residues 1 to 15 (MPNHQSGSPTGSSDL) show a composition bias toward polar residues. Residues 1 to 31 (MPNHQSGSPTGSSDLLLSGKKQRPHLALRRK) form a disordered region. An N-terminal signal peptide occupies residues 1-98 (MPNHQSGSPT…SVLGPPPVTG (98 aa)). The span at 20–31 (KKQRPHLALRRK) shows a compositional bias: basic residues. The Extracellular portion of the chain corresponds to 99-624 (ESYWAYLPKP…ALNPLDWTQY (526 aa)). Asparagine 127 and asparagine 143 each carry an N-linked (GlcNAc...) asparagine; by host glycan. Residues 426 to 474 (LLPVDIGDEPWFDDSAIQTFRYATDLIRAKRFVAAIILGISALIAIITS) adopt a coiled-coil conformation. Residues 455 to 456 (KR) constitute a propeptide that is removed on maturation. Residues 457–477 (FVAAIILGISALIAIITSFAV) form a fusion peptide region. The interval 463 to 481 (LGISALIAIITSFAVATTA) is immunosuppression. An N-linked (GlcNAc...) asparagine; by host glycan is attached at asparagine 498. Residues 511–541 (LKLEARLNALEEVVLELGQDVANLKTRMSTR) adopt a coiled-coil conformation. Asparagine 557 carries N-linked (GlcNAc...) asparagine; by host glycosylation. Residues 625–645 (FIFIGVGALLLVIVLMIFPIV) traverse the membrane as a helical segment. The Cytoplasmic segment spans residues 646 to 688 (FQCLAKSLDQVQSDLNVLLLKKKKGGNAAPAAEMVELPRVSYT).

The mature envelope protein (Env) consists of a trimer of SU-TM heterodimers attached by noncovalent interactions or by a labile interchain disulfide bond. Specific enzymatic cleavages in vivo yield mature proteins. Envelope glycoproteins are synthesized as an inactive precursor that is N-glycosylated and processed likely by host cell furin or by a furin-like protease in the Golgi to yield the mature SU and TM proteins. The cleavage site between SU and TM requires the minimal sequence [KR]-X-[KR]-R.

The protein localises to the virion membrane. It localises to the host cell membrane. Its function is as follows. The surface protein (SU) attaches the virus to the host cell by binding to its receptor. This interaction triggers the refolding of the transmembrane protein (TM) and is thought to activate its fusogenic potential by unmasking its fusion peptide. Fusion occurs at the host cell plasma membrane. Functionally, the transmembrane protein (TM) acts as a class I viral fusion protein. Under the current model, the protein has at least 3 conformational states: pre-fusion native state, pre-hairpin intermediate state, and post-fusion hairpin state. During viral and target cell membrane fusion, the coiled coil regions (heptad repeats) assume a trimer-of-hairpins structure, positioning the fusion peptide in close proximity to the C-terminal region of the ectodomain. The formation of this structure appears to drive apposition and subsequent fusion of viral and target cell membranes. Membranes fusion leads to delivery of the nucleocapsid into the cytoplasm. In Mus musculus (Mouse), this protein is Envelope glycoprotein gp70 (env).